Here is a 299-residue protein sequence, read N- to C-terminus: Acetaldehyde dehydrogenase 6 (299 aa).

Cys125 (acyl-thioester intermediate) is an active-site residue. NAD(+) contacts are provided by residues 156–164 and Asn275; that span reads GAGPGTRAN.

The protein belongs to the acetaldehyde dehydrogenase family.

The catalysed reaction is acetaldehyde + NAD(+) + CoA = acetyl-CoA + NADH + H(+). The chain is Acetaldehyde dehydrogenase 6 (hpdG) from Rhodococcus jostii (strain RHA1).